A 190-amino-acid chain; its full sequence is MGEKMQGFQGWSIGIRFLTSCVSIASLILLLKSKQTVQVSVGLDYVTQQVKYSDTSAFVYLVFSDILVAVYCIVVLVGLIPAALGKSHPGKAGQWAIFIFDQVLAYVLLAAASSATEVAYLADKGMAKTSWEAVCPRFAHFCHTVMASISLSFVAVLLLALLAVVSASGLFGRFYRRPLFAVKMRHNTLI.

The Cytoplasmic portion of the chain corresponds to Met1 to Gly10. The helical transmembrane segment at Trp11–Leu31 threads the bilayer. The Extracellular portion of the chain corresponds to Lys32–Val59. Residues Tyr60 to Ile80 traverse the membrane as a helical segment. Topologically, residues Pro81–Gln94 are cytoplasmic. Residues Trp95–Ala115 form a helical membrane-spanning segment. Residues Thr116 to Thr144 are Extracellular-facing. Residues Val145–Val165 traverse the membrane as a helical segment. The Cytoplasmic segment spans residues Ser166–Ile190.

It belongs to the Casparian strip membrane proteins (CASP) family. Homodimer and heterodimers.

The protein localises to the cell membrane. The polypeptide is CASP-like protein 2U2 (Pteridium aquilinum subsp. aquilinum (Bracken fern)).